Here is a 661-residue protein sequence, read N- to C-terminus: tRNA uridine 5-carboxymethylaminomethyl modification enzyme MnmG (661 aa).

13–18 is an FAD binding site; that stretch reads GGGHAG. An NAD(+)-binding site is contributed by 285 to 299; sequence GPRYCPSVEDKINRF.

Belongs to the MnmG family. As to quaternary structure, homodimer. Heterotetramer of two MnmE and two MnmG subunits. The cofactor is FAD.

Its subcellular location is the cytoplasm. Functionally, NAD-binding protein involved in the addition of a carboxymethylaminomethyl (cmnm) group at the wobble position (U34) of certain tRNAs, forming tRNA-cmnm(5)s(2)U34. The protein is tRNA uridine 5-carboxymethylaminomethyl modification enzyme MnmG of Acidovorax sp. (strain JS42).